Here is a 105-residue protein sequence, read N- to C-terminus: MNIYDVLIWMALGMTALLIQYGIWRYLKGKGKDTIPLQICGFLANFFFIFALAWGYSSFSEREYQAIGMGFIFFGGTALIPAIITYRLANHPAKKIRESSDTISA.

A run of 3 helical transmembrane segments spans residues 3–23 (IYDV…QYGI), 35–55 (IPLQ…LAWG), and 66–86 (AIGM…IITY).

This sequence belongs to the PceB family.

Its subcellular location is the cell membrane. Its function is as follows. May act as a membrane anchor for the tetrachloroethene reductive dehalogenase PceA. The protein is Probable tetrachloroethene reductive dehalogenase membrane anchor protein of Dehalobacter restrictus (strain DSM 9455 / PER-K23).